Reading from the N-terminus, the 1737-residue chain is Intraflagellar transport protein osm-1 (1737 aa).

7 WD repeats span residues 14 to 53 (DGEAKISNISCSPNGSRAAIACSDRSVALLDENGVQKDRF), 63 to 103 (GKKS…NEKK), 110 to 150 (VQPS…SLYK), 151 to 189 (TDETVVSIQTHPKRTSFVSAHQDGSIILYNFSSRTQSKI), 191 to 229 (TLQVPPYNLVFTNHGLVVATSDRRVLSYTENGVVQQQFD), 233 to 273 (QSEK…WDEG), and 511 to 553 (DQRS…EQVT). TPR repeat units follow at residues 700–737 (NDTESAIGMYTSLHKWDEALELAKVLNYPEYEQLKTSY), 803–836 (SQLYDKAGDVYEKLKDFDKAVEYFKKGDAYGKAI), 848–881 (VTLEQEWGLHLEYIGQYDAAVNHFVEANDLKKAV), 907–940 (TGYYGEIADHYSNKGDFERAERLFVEAGLFNDAI), 979–1012 (HGRFAEAEQLYITIGMPHKAIQMYDRVGRDDDVL), 1037–1070 (RGDLKAAEEQFLKAGDFRSAVNMYKDSEMWSDAY), and 1137–1170 (GTVHVRLATQLEEEGRLEDASKHYVEGNKPELAV).

It belongs to the IFT172 family. Component of the IFT complex B composed of at least che-2, che-13, dyf-1, dyf-3, dyf-6, dyf-11, dyf-13, ift-20, ift-74, ift-81, ifta-2, osm-1, osm-5 and osm-6. As to expression, expressed in amphid and phasmid chemosensory neurons, where it appears to concentrate at the base of the transition zones, which correspond to the basal bodies of motile and sensory cilia. Moves in the retrograde direction along cilia and dendrites, suggesting that it is retrieved from the distal endings of the cilia by a retrograde transport pathway that moves it along cilia and then dendrites, back to the neuronal cell body.

It is found in the cell projection. The protein localises to the cilium. Component of the intraflagellar transport (IFT) complex B required for transport of proteins in the motile cilium. May be required for ciliary entrance and transport of specific ciliary cargo proteins such as che-3 which are related to motility. Required for the maintenance and formation of chemosensory cilia that detect chemosensory cues. This chain is Intraflagellar transport protein osm-1, found in Caenorhabditis elegans.